The following is a 65-amino-acid chain: Large ribosomal subunit protein bL35 (65 aa).

Residues 1–28 form a disordered region; that stretch reads MPKMKTHRGAAKRFKKTGTGKIKRGQSK.

This sequence belongs to the bacterial ribosomal protein bL35 family.

The chain is Large ribosomal subunit protein bL35 from Acidobacterium capsulatum (strain ATCC 51196 / DSM 11244 / BCRC 80197 / JCM 7670 / NBRC 15755 / NCIMB 13165 / 161).